We begin with the raw amino-acid sequence, 141 residues long: Oleosin 14.9 kDa (141 aa).

Positions 1–22 are enriched in basic and acidic residues; it reads MADQTRTHHEMISRDSTQEAHP. Positions 1 to 24 are disordered; that stretch reads MADQTRTHHEMISRDSTQEAHPKA. Positions 1–29 are polar; that stretch reads MADQTRTHHEMISRDSTQEAHPKARQMVK. Residues 30-141 form a hydrophobic region; it reads AATAVTAGGS…NIGVQHQQVS (112 aa). The next 3 membrane-spanning stretches (helical) occupy residues 38–58, 60–80, and 81–101; these read GSLL…LTVA, PLLV…ALII, and TGFL…SWLY.

Belongs to the oleosin family.

Its subcellular location is the lipid droplet. The protein resides in the membrane. Functionally, may have a structural role to stabilize the lipid body during desiccation of the seed by preventing coalescence of the oil. Probably interacts with both lipid and phospholipid moieties of lipid bodies. May also provide recognition signals for specific lipase anchorage in lipolysis during seedling growth. The protein is Oleosin 14.9 kDa (OL3) of Arabidopsis thaliana (Mouse-ear cress).